Here is a 240-residue protein sequence, read N- to C-terminus: UDP-2,3-diacylglucosamine hydrolase (240 aa).

Mn(2+) contacts are provided by D8, H10, D41, N79, and H114. N79–R80 lines the substrate pocket. Residues D122, S160, N164, K167, and H195 each coordinate substrate. The Mn(2+) site is built by H195 and H197.

It belongs to the LpxH family. Mn(2+) is required as a cofactor.

Its subcellular location is the cell inner membrane. It carries out the reaction UDP-2-N,3-O-bis[(3R)-3-hydroxytetradecanoyl]-alpha-D-glucosamine + H2O = 2-N,3-O-bis[(3R)-3-hydroxytetradecanoyl]-alpha-D-glucosaminyl 1-phosphate + UMP + 2 H(+). It functions in the pathway glycolipid biosynthesis; lipid IV(A) biosynthesis; lipid IV(A) from (3R)-3-hydroxytetradecanoyl-[acyl-carrier-protein] and UDP-N-acetyl-alpha-D-glucosamine: step 4/6. Its function is as follows. Hydrolyzes the pyrophosphate bond of UDP-2,3-diacylglucosamine to yield 2,3-diacylglucosamine 1-phosphate (lipid X) and UMP by catalyzing the attack of water at the alpha-P atom. Involved in the biosynthesis of lipid A, a phosphorylated glycolipid that anchors the lipopolysaccharide to the outer membrane of the cell. This chain is UDP-2,3-diacylglucosamine hydrolase, found in Serratia proteamaculans (strain 568).